A 132-amino-acid chain; its full sequence is MVDQLQGTWKSVSCENFENYMKELGAGRAIRKLGCLARPVVTISTDGDRITIKTKSIFKNKEISFKLGEEFEEITPGGRKSKSTVVLDNDSLVQVQDWDGKEATIRRRLVDGKMVVESAVNNVTCTRTYQRV.

Residues R107 and R127–Y129 contribute to the a fatty acid site.

This sequence belongs to the calycin superfamily. Fatty-acid binding protein (FABP) family. Highly expressed in adult retina and testis with lower levels in cerebral cortex, kidney and epididymis. In the retina, strongly expressed in the ganglion cell layer and throughout the inner nuclear layer in amacrine and bipolar cells. Not expressed in the outer nuclear layer. In the testis, detected in the seminiferous tubules.

Functionally, may play a role in lipid transport. This Rattus norvegicus (Rat) protein is Fatty acid-binding protein 12.